Reading from the N-terminus, the 108-residue chain is Glutaredoxin-1 (108 aa).

The Glutaredoxin domain maps to 3-106 (EEFVQQRLAN…DILSSIGVLR (104 aa)). A disulfide bridge links cysteine 23 with cysteine 26.

It belongs to the glutaredoxin family.

The protein localises to the virion. Functionally, displays thioltransferase and dehydroascorbate reductase activities. The sequence is that of Glutaredoxin-1 (OPG075) from Vaccinia virus (strain Copenhagen) (VACV).